Here is a 184-residue protein sequence, read N- to C-terminus: Glutathione-regulated potassium-efflux system ancillary protein KefG (184 aa).

It belongs to the NAD(P)H dehydrogenase (quinone) family. KefG subfamily. In terms of assembly, interacts with KefB.

It is found in the cell inner membrane. The enzyme catalyses a quinone + NADH + H(+) = a quinol + NAD(+). It catalyses the reaction a quinone + NADPH + H(+) = a quinol + NADP(+). Regulatory subunit of a potassium efflux system that confers protection against electrophiles. Required for full activity of KefB. The chain is Glutathione-regulated potassium-efflux system ancillary protein KefG from Erwinia tasmaniensis (strain DSM 17950 / CFBP 7177 / CIP 109463 / NCPPB 4357 / Et1/99).